The primary structure comprises 302 residues: Nucleoside kinase (302 aa).

Substrate-binding residues include aspartate 17, glutamine 33, glycine 43, and asparagine 47. An ATP-binding site is contributed by glutamine 109. Residues 111–113 and glutamine 163 each bind substrate; that span reads TFF. ATP is bound by residues asparagine 186 and 214 to 219; that span reads TKGSKG. A substrate-binding site is contributed by aspartate 247. Aspartate 247 (proton acceptor) is an active-site residue.

Homodimer. The cofactor is Mg(2+). It depends on Mn(2+) as a cofactor.

The enzyme catalyses cytidine + ATP = CMP + ADP + H(+). It carries out the reaction guanosine + ATP = GMP + ADP + H(+). It catalyses the reaction inosine + ATP = IMP + ADP + H(+). Its function is as follows. Catalyzes the phosphorylation of a wide range of nucleosides to yield nucleoside monophosphates. Shows the highest activity for inosine, guanosine and cytidine, but very poor kinase activity with adenosine, thymidine, uridine and xanthosine. ATP is the best phosphate donor, but can also use ITP and GTP. Shows extremely low activity with fructose-6-phosphate. This Methanocaldococcus jannaschii (strain ATCC 43067 / DSM 2661 / JAL-1 / JCM 10045 / NBRC 100440) (Methanococcus jannaschii) protein is Nucleoside kinase.